Reading from the N-terminus, the 279-residue chain is Zinc finger CCCH domain-containing protein 42 (279 aa).

The disordered stretch occupies residues 11–77 (SDHRSSSTPM…KAAVEPQEYP (67 aa)). Residues 16 to 39 (SSTPMATTTSSSASDPAAISPTPS) are compositionally biased toward low complexity. C3H1-type zinc fingers lie at residues 79-107 (RPGV…HPAK), 120-148 (RPGE…HPPD), and 186-214 (RPGT…HPNS).

This Oryza sativa subsp. japonica (Rice) protein is Zinc finger CCCH domain-containing protein 42.